The sequence spans 315 residues: 4-carboxy-2-hydroxymuconate-6-semialdehyde dehydrogenase (315 aa).

Belongs to the Gfo/Idh/MocA family. As to quaternary structure, homodimer.

It carries out the reaction 4-carboxy-2-hydroxymuconate semialdehyde hemiacetal + NADP(+) = 2-oxo-2H-pyran-4,6-dicarboxylate + NADPH + H(+). It participates in secondary metabolite metabolism; lignin degradation. Inhibited by p-chloromercuribenzoate (10 mM), HgCl2 (10 mM), or 5,5-dithiobis(2-nitrobenzoate) (100 mM). Its function is as follows. Involved in the degradation of protocatechuate (PCA) via the PCA 4,5-cleavage pathway. Catalyzes the oxidation of the hemiacetal form of 4-carboxy-2-hydroxymuconate-6-semialdehyde (CHMS) to produce 2-pyrone-4,6-dicarboxylate (PDC). LigC has 10-times-higher affinity to NADP than to NAD. This Sphingobium sp. (strain NBRC 103272 / SYK-6) protein is 4-carboxy-2-hydroxymuconate-6-semialdehyde dehydrogenase (ligC).